An 868-amino-acid chain; its full sequence is uncharacterized protein (868 aa).

The protein resides in the cytoplasm. Its subcellular location is the nucleus. This is an uncharacterized protein from Schizosaccharomyces pombe (strain 972 / ATCC 24843) (Fission yeast).